A 559-amino-acid polypeptide reads, in one-letter code: Small ribosomal subunit protein uS3m (559 aa).

Residues 113-134 (EGTEEERNEVRGRGAGKRVESI) are disordered. Basic and acidic residues predominate over residues 120–134 (NEVRGRGAGKRVESI).

It belongs to the universal ribosomal protein uS3 family.

The protein localises to the mitochondrion. The protein is Small ribosomal subunit protein uS3m (RPS3) of Zea mays (Maize).